A 162-amino-acid polypeptide reads, in one-letter code: uncharacterized protein (162 aa).

A signal peptide spans 1–24 (MKRGVATLPVILVILLSVAAGAGA).

This is an uncharacterized protein from Mycobacterium bovis (strain ATCC BAA-935 / AF2122/97).